The primary structure comprises 294 residues: Nucleophosmin (294 aa).

Residues 121–133 (LEEEPESEDEEED) show a composition bias toward acidic residues. Positions 121–244 (LEEEPESEDE…PKTPKVPLSL (124 aa)) are disordered. Residues 153–158 (PQKKPK) carry the Nuclear localization signal motif. Residues 161 to 186 (EDDEDDDEDEDDDEDDEDDLDDDEEE) are compositionally biased toward acidic residues. The short motif at 190–196 (PMKKPAR) is the Nuclear localization signal element. The span at 223–233 (KTPDSKKDKSL) shows a compositional bias: basic and acidic residues.

The protein belongs to the nucleoplasmin family. As to quaternary structure, decamer formed by two pentameric rings associated in a head-to-head fashion. Post-translationally, phosphorylated.

It localises to the cytoplasm. Its subcellular location is the nucleus. The protein resides in the nucleoplasm. The protein localises to the nucleolus. Its function is as follows. Acts as a chaperonin for the core histones H3, H2B and H4. Associated with nucleolar ribonucleoprotein structures and bind single-stranded nucleic acids. It may function in the assembly and/or transport of ribosome. May stimulate endonuclease activity on apurinic/apyrimidinic (AP) double-stranded DNA. May inhibit endonuclease activity on AP single-stranded RNA. The protein is Nucleophosmin (NPM1) of Gallus gallus (Chicken).